Reading from the N-terminus, the 691-residue chain is DNA ligase (691 aa).

Residues 56–60, 104–105, and glutamate 139 each bind NAD(+); these read DRAYD and SI. Lysine 141 (N6-AMP-lysine intermediate) is an active-site residue. Residues arginine 162, glutamate 198, lysine 314, and lysine 338 each coordinate NAD(+). Cysteine 429, cysteine 432, cysteine 445, and cysteine 451 together coordinate Zn(2+). The BRCT domain maps to 607–691; it reads TAGDALSGQT…SLLESHGIEI (85 aa).

The protein belongs to the NAD-dependent DNA ligase family. LigA subfamily. Mg(2+) serves as cofactor. It depends on Mn(2+) as a cofactor.

The catalysed reaction is NAD(+) + (deoxyribonucleotide)n-3'-hydroxyl + 5'-phospho-(deoxyribonucleotide)m = (deoxyribonucleotide)n+m + AMP + beta-nicotinamide D-nucleotide.. In terms of biological role, DNA ligase that catalyzes the formation of phosphodiester linkages between 5'-phosphoryl and 3'-hydroxyl groups in double-stranded DNA using NAD as a coenzyme and as the energy source for the reaction. It is essential for DNA replication and repair of damaged DNA. The chain is DNA ligase from Natronomonas pharaonis (strain ATCC 35678 / DSM 2160 / CIP 103997 / JCM 8858 / NBRC 14720 / NCIMB 2260 / Gabara) (Halobacterium pharaonis).